A 572-amino-acid polypeptide reads, in one-letter code: AAA ATPase forming ring-shaped complexes (572 aa).

A compositionally biased stretch (low complexity) spans 1 to 18 (MTTASQQTSSHSTASSTS). The disordered stretch occupies residues 1-30 (MTTASQQTSSHSTASSTSRKGNNNDATPSL). Residues 42–70 (TRNAKLVEMLKASRDKLDALNEQIRALSD) adopt a coiled-coil conformation. ATP is bound at residue 258–263 (GCGKTL). The disordered stretch occupies residues 543–572 (VAHHNRKTTTETEATEPEGTDSGKGHTDAS). The span at 563-572 (DSGKGHTDAS) shows a compositional bias: basic and acidic residues.

It belongs to the AAA ATPase family. In terms of assembly, homohexamer. Assembles into a hexameric ring structure.

In Corynebacterium kroppenstedtii (strain DSM 44385 / JCM 11950 / CIP 105744 / CCUG 35717), this protein is AAA ATPase forming ring-shaped complexes.